Consider the following 394-residue polypeptide: Acetyl-CoA acetyltransferase (394 aa).

Catalysis depends on Cys88, which acts as the Acyl-thioester intermediate. Active-site proton acceptor residues include His349 and Cys379.

This sequence belongs to the thiolase-like superfamily. Thiolase family.

Its subcellular location is the cytoplasm. It carries out the reaction 2 acetyl-CoA = acetoacetyl-CoA + CoA. The protein operates within metabolic intermediate biosynthesis; (R)-mevalonate biosynthesis; (R)-mevalonate from acetyl-CoA: step 1/3. In Escherichia coli (strain K12), this protein is Acetyl-CoA acetyltransferase (atoB).